A 123-amino-acid polypeptide reads, in one-letter code: Histone H2B (123 aa).

The interval 1-30 (MPPKTSGKAAKKAGKAQKNITKTDKKKKRK) is disordered. Proline 2 is modified (N-methylproline; partial). Lysine 44 bears the N6-succinyllysine mark. Serine 110 carries O-linked (GlcNAc) serine glycosylation. N6-succinyllysine is present on residues lysine 114 and lysine 118. Residue lysine 118 forms a Glycyl lysine isopeptide (Lys-Gly) (interchain with G-Cter in ubiquitin) linkage.

The protein belongs to the histone H2B family. In terms of assembly, the nucleosome is a histone octamer containing two molecules each of H2A, H2B, H3 and H4 assembled in one H3-H4 heterotetramer and two H2A-H2B heterodimers. The octamer wraps approximately 147 bp of DNA. Phosphorylated by the catalytic component of the Dbf4-dependent kinase (DDK) complex Cdc7. In terms of processing, monoubiquitination of Lys-118 by Bre1 gives a specific tag for epigenetic transcriptional activation and is also prerequisite for histone H3 'Lys-4' and 'Lys-79' methylation. Deubiquitination of Lys-118 by the SAGA complex is involved in activating transcription of a large subset of genes. Post-translationally, methylation at Pro-2 increases upon heat shock. GlcNAcylation at Ser-110 promotes monoubiquitination of Lys-118. It fluctuates in response to extracellular glucose, and associates with transcribed genes.

It localises to the nucleus. The protein resides in the chromosome. In terms of biological role, core component of nucleosome. Nucleosomes wrap and compact DNA into chromatin, limiting DNA accessibility to the cellular machineries which require DNA as a template. Histones thereby play a central role in transcription regulation, DNA repair, DNA replication and chromosomal stability. DNA accessibility is regulated via a complex set of post-translational modifications of histones, also called histone code, and nucleosome remodeling. This Drosophila erecta (Fruit fly) protein is Histone H2B (His2B).